A 134-amino-acid polypeptide reads, in one-letter code: uncharacterized protein (134 aa).

A run of 3 helical transmembrane segments spans residues valine 26–glycine 46, leucine 55–valine 75, and tyrosine 101–leucine 121.

The protein localises to the membrane. This is an uncharacterized protein from Dictyostelium discoideum (Social amoeba).